A 577-amino-acid chain; its full sequence is Arginine--tRNA ligase (577 aa).

The 'HIGH' region motif lies at 122 to 132 (PNVAKEMHVGH).

Belongs to the class-I aminoacyl-tRNA synthetase family. As to quaternary structure, monomer.

It localises to the cytoplasm. The catalysed reaction is tRNA(Arg) + L-arginine + ATP = L-arginyl-tRNA(Arg) + AMP + diphosphate. In Vibrio vulnificus (strain CMCP6), this protein is Arginine--tRNA ligase.